We begin with the raw amino-acid sequence, 645 residues long: 1,4-alpha-glucan branching enzyme GlgB (645 aa).

Asp-309 serves as the catalytic Nucleophile. The Proton donor role is filled by Glu-352. A disordered region spans residues 619 to 645; the sequence is VKTRKGSKKQDGSKTKVRSNVTSRGKR. Over residues 636–645 the composition is skewed to polar residues; it reads RSNVTSRGKR.

The protein belongs to the glycosyl hydrolase 13 family. GlgB subfamily. In terms of assembly, monomer.

It carries out the reaction Transfers a segment of a (1-&gt;4)-alpha-D-glucan chain to a primary hydroxy group in a similar glucan chain.. The protein operates within glycan biosynthesis; glycogen biosynthesis. In terms of biological role, catalyzes the formation of the alpha-1,6-glucosidic linkages in glycogen by scission of a 1,4-alpha-linked oligosaccharide from growing alpha-1,4-glucan chains and the subsequent attachment of the oligosaccharide to the alpha-1,6 position. This is 1,4-alpha-glucan branching enzyme GlgB from Bacillus anthracis (strain CDC 684 / NRRL 3495).